A 486-amino-acid polypeptide reads, in one-letter code: ATP-dependent rRNA helicase rrp3 (486 aa).

The disordered stretch occupies residues 1 to 60 (MSSVKRRKTDKNPSLEGLKSKKTKESKKESHTPSPEPIEDTEDNRVIEETEEAEEDDAPK). Positions 60–88 (KSFKDLGIVDSLCEACDTLGYKAPTPIQR) match the Q motif motif. The region spanning 91–262 (IPLALQGRDL…RASLKDPLRV (172 aa)) is the Helicase ATP-binding domain. 104-111 (AETGSGKT) serves as a coordination point for ATP. The DEAD box motif lies at 210 to 213 (DEAD). The Helicase C-terminal domain maps to 286–434 (HKDTYLIYLL…EYPTVKDEVM (149 aa)). Basic and acidic residues-rich tracts occupy residues 447–460 (ARNEMKNLHEDRGK) and 476–486 (RGRDEMDREEG). Residues 447–486 (ARNEMKNLHEDRGKKGAVLKGRRPANGAKRGRDEMDREEG) are disordered.

It belongs to the DEAD box helicase family. DDX47/RRP3 subfamily. Interacts with the SSU processome.

It is found in the nucleus. It catalyses the reaction ATP + H2O = ADP + phosphate + H(+). Its function is as follows. ATP-dependent rRNA helicase required for pre-ribosomal RNA processing. Involved in the maturation of the 35S-pre-rRNA and to its cleavage to mature 18S rRNA. This is ATP-dependent rRNA helicase rrp3 from Botryotinia fuckeliana (strain B05.10) (Noble rot fungus).